The primary structure comprises 589 residues: MNFDNTVHESNFDDLLHNPNFPPQFDQLELDSLLYGTDESQESTSSSSFGFSDQNAGFRSRDGGSLGDSSSDSSPPLSCANFTENDQEMWDFGFQSRSPFENFEQQFGSPYQDDEVIAEPTNEFMNARYLREEPAKHLPMQQKRIITILPKQSQPVKRIVSRPIQKVYRVKESPGSQQQTYRVVQPLMPSPSQATQRQIKQMYYNEPVQEIHMQPKSGPLVRQVSEEPRYVPIAPTVDIKAEPQVFTSEQNRKIRNRMYAQASRMRKKEADEHMKMNLQELLQENEILRTENAALKQRLAFFEHEEPVVEVPQPFGRNQKKKRIIAAGSVLMMFGLFAVISPFNVDNNLNINNQIMAISNETSMVARHGRVITYEDSAPVAKIPTQQPIHNYPNSTQNDCDMYKLNATETIRVNNDIERWVQVHSFDNVPMKFSGGLLNKEAMRKFNYAQKVKPASVYGPQTLAVQKKSEQAALRSRERTWKQLDLLKTGNNIQLDNEKIQRKRQDIDKIASIVRQKGDTLYIMTLQDYVLLPSLIKGANSVPKLSLLLPSVPMNGTLQDQYTLLRVDCEVTGTGQLTLSNKQLSYLMP.

Residues 1–16 are compositionally biased toward basic and acidic residues; the sequence is MNFDNTVHESNFDDLL. Residues 1–82 are disordered; that stretch reads MNFDNTVHES…SSPPLSCANF (82 aa). Low complexity-rich tracts occupy residues 36 to 54 and 67 to 78; these read GTDE…FSDQ and GDSSSDSSPPLS. The region spanning 250-299 is the bZIP domain; it reads QNRKIRNRMYAQASRMRKKEADEHMKMNLQELLQENEILRTENAALKQRL. The segment at 252–275 is basic motif; sequence RKIRNRMYAQASRMRKKEADEHMK. Positions 271–305 form a coiled coil; sequence DEHMKMNLQELLQENEILRTENAALKQRLAFFEHE. Positions 281-295 are leucine-zipper; the sequence is LLQENEILRTENAAL. A helical membrane pass occupies residues 324–344; that stretch reads IIAAGSVLMMFGLFAVISPFN.

It belongs to the bZIP family. ATF subfamily.

The protein localises to the nucleus. Its subcellular location is the membrane. Functionally, transcription factor. Plays a role in the unfolded protein response (UPR), perhaps mainly during constitutive endoplasmic reticulum (ER) stress, by activating transcription of genes involved in the UPR. Plays a role in modulating lifespan, acting by positively regulating expression of calcium-binding chaperone crt-1, thereby influencing ER calcium homeostasis. By activating the UPR pathway, confers adaptive protection to subsequent exposure to hypoxia. Involved in protection against proteotoxicity, probably acting via the UPR. Probably acts in the UPR in parallel with the ire-1-xbp-1 and pek-1 pathways. May be regulated by endopeptidase S2P-mediated proteolytic cleavage. The sequence is that of Transcription factor atf-6 homolog from Caenorhabditis elegans.